The chain runs to 486 residues: Arginine deiminase (486 aa).

C476 serves as the catalytic Amidino-cysteine intermediate.

It belongs to the arginine deiminase family.

It localises to the cytoplasm. The enzyme catalyses L-arginine + H2O = L-citrulline + NH4(+). The protein operates within amino-acid degradation; L-arginine degradation via ADI pathway; carbamoyl phosphate from L-arginine: step 1/2. Its function is as follows. Involved in the arginine deiminase pathway of fermentative arginine utilization. The chain is Arginine deiminase (arcA) from Halobacterium salinarum (strain ATCC 29341 / DSM 671 / R1).